The primary structure comprises 238 residues: Large ribosomal subunit protein uL2 (238 aa).

The segment at 199–238 (PHGGGLHQSVSRPSTVSRNAPPGRKVGHIAARRTGRKEGA) is disordered. Positions 206-216 (QSVSRPSTVSR) are enriched in polar residues. A compositionally biased stretch (basic residues) spans 223-238 (KVGHIAARRTGRKEGA).

The protein belongs to the universal ribosomal protein uL2 family. In terms of assembly, part of the 50S ribosomal subunit. Forms a bridge to the 30S subunit in the 70S ribosome.

Functionally, one of the primary rRNA binding proteins. Required for association of the 30S and 50S subunits to form the 70S ribosome, for tRNA binding and peptide bond formation. It has been suggested to have peptidyltransferase activity; this is somewhat controversial. Makes several contacts with the 16S rRNA in the 70S ribosome. This is Large ribosomal subunit protein uL2 from Sulfurisphaera tokodaii (strain DSM 16993 / JCM 10545 / NBRC 100140 / 7) (Sulfolobus tokodaii).